Reading from the N-terminus, the 873-residue chain is Zinc fingers and homeoboxes protein 1 (873 aa).

Residues 1–63 (MASRRKSTTP…ESVDSDNQQN (63 aa)) are disordered. The segment covering 18 to 30 (QDPDLELISDLDE) has biased composition (acidic residues). Phosphothreonine is present on threonine 36. Serine 45, serine 47, and serine 48 each carry phosphoserine. C2H2-type zinc fingers lie at residues 70-93 (YECK…DSEH) and 102-125 (YVCV…LKYH). Residue lysine 159 forms a Glycyl lysine isopeptide (Lys-Gly) (interchain with G-Cter in SUMO2) linkage. Serine 202 carries the post-translational modification Phosphoserine. Positions 202–236 (SVEDVPEEKENEIKPDREEIVENPSSSASESNTST) are disordered. Residues 212-221 (NEIKPDREEI) are compositionally biased toward basic and acidic residues. Positions 223-236 (ENPSSSASESNTST) are enriched in low complexity. Positions 272–432 (NSNLIPKVLI…QNNVQKSQVP (161 aa)) are required for dimerization. The segment at 272-564 (NSNLIPKVLI…AQPKQSWNPF (293 aa)) is required for interaction with NFYA. Positions 284–346 (NSIPTYNAAL…LKHGVSWTPE (63 aa)) form a DNA-binding region, homeobox 1. Glycyl lysine isopeptide (Lys-Gly) (interchain with G-Cter in SUMO2) cross-links involve residues lysine 441, lysine 454, lysine 485, and lysine 629. 2 DNA-binding regions (homeobox) span residues 464–526 (SFGI…KSNQ) and 569–630 (PQKF…EEKM). 2 disordered regions span residues 626–667 (KEEK…ICKK) and 732–769 (SSMN…INNW). Serine 648 is subject to Phosphoserine. A DNA-binding region (homeobox 4) is located at residues 660-722 (STGKICKKTP…YAWKNGNLKW (63 aa)). Residues 734–768 (MNGLSSLRKRGRGRPKGRGRGRPRGRPRGSKRINN) are required for nuclear localization. Over residues 740–764 (LRKRGRGRPKGRGRGRPRGRPRGSK) the composition is skewed to basic residues. Serine 774 is subject to Phosphoserine. Positions 777 to 832 (KFKTGTAILKDYYLKHKFLNEQDLDELVNKSHMGYEQVREWFAERQRRSELGIELF) form a DNA-binding region, homeobox 5. The tract at residues 829–873 (IELFEENEEEDEVIDDQEEDEEETDDSDTWEPPRHVKRKLSKSDD) is disordered. Acidic residues predominate over residues 831–857 (LFEENEEEDEVIDDQEEDEEETDDSDT). Residues 831–873 (LFEENEEEDEVIDDQEEDEEETDDSDTWEPPRHVKRKLSKSDD) form a required for repressor activity region. Positions 863-873 (HVKRKLSKSDD) are enriched in basic residues.

Belongs to the ZHX family. Forms homodimers. Also forms heterodimers with ZHX3 which is a prerequisite for repressor activity and with ZHX2. Interacts with NFYA. Interacts with ATF7IP.

Its subcellular location is the nucleus. Its function is as follows. Acts as a transcriptional repressor. The protein is Zinc fingers and homeoboxes protein 1 (ZHX1) of Gorilla gorilla gorilla (Western lowland gorilla).